Reading from the N-terminus, the 230-residue chain is Ribose-5-phosphate isomerase A (230 aa).

Substrate contacts are provided by residues 29 to 32 (TGST), 85 to 88 (DGAD), and 99 to 102 (KGAG). Glu108 (proton acceptor) is an active-site residue. Lys126 contributes to the substrate binding site.

This sequence belongs to the ribose 5-phosphate isomerase family. Homodimer.

It carries out the reaction aldehydo-D-ribose 5-phosphate = D-ribulose 5-phosphate. It participates in carbohydrate degradation; pentose phosphate pathway; D-ribose 5-phosphate from D-ribulose 5-phosphate (non-oxidative stage): step 1/1. Its function is as follows. Catalyzes the reversible conversion of ribose-5-phosphate to ribulose 5-phosphate. The chain is Ribose-5-phosphate isomerase A from Synechococcus sp. (strain JA-3-3Ab) (Cyanobacteria bacterium Yellowstone A-Prime).